The following is a 197-amino-acid chain: Glycerol-3-phosphate acyltransferase (197 aa).

The next 5 helical transmembrane spans lie at 1–21, 50–70, 82–102, 112–132, and 159–179; these read MDFIFPLISYLLGAIPFGLLI, LGFATLLCDSLKGFLPMVLAA, IVCLSGVMGVLGHMFPVYLGF, LGVFLFLSPAAIAISLGVFAA, and GASQLKIITAGFVALLIWIKH.

It belongs to the PlsY family. As to quaternary structure, probably interacts with PlsX.

Its subcellular location is the cell inner membrane. The enzyme catalyses an acyl phosphate + sn-glycerol 3-phosphate = a 1-acyl-sn-glycero-3-phosphate + phosphate. Its pathway is lipid metabolism; phospholipid metabolism. Functionally, catalyzes the transfer of an acyl group from acyl-phosphate (acyl-PO(4)) to glycerol-3-phosphate (G3P) to form lysophosphatidic acid (LPA). This enzyme utilizes acyl-phosphate as fatty acyl donor, but not acyl-CoA or acyl-ACP. The chain is Glycerol-3-phosphate acyltransferase from Desulfotalea psychrophila (strain LSv54 / DSM 12343).